A 182-amino-acid chain; its full sequence is Large ribosomal subunit protein uL10 (182 aa).

It belongs to the universal ribosomal protein uL10 family. As to quaternary structure, part of the ribosomal stalk of the 50S ribosomal subunit. The N-terminus interacts with L11 and the large rRNA to form the base of the stalk. The C-terminus forms an elongated spine to which L12 dimers bind in a sequential fashion forming a multimeric L10(L12)X complex.

Functionally, forms part of the ribosomal stalk, playing a central role in the interaction of the ribosome with GTP-bound translation factors. In Koribacter versatilis (strain Ellin345), this protein is Large ribosomal subunit protein uL10.